Reading from the N-terminus, the 500-residue chain is L-arabinose isomerase (500 aa).

Positions 306, 333, 350, and 450 each coordinate Mn(2+).

This sequence belongs to the arabinose isomerase family. Homohexamer. It depends on Mn(2+) as a cofactor.

The catalysed reaction is beta-L-arabinopyranose = L-ribulose. It participates in carbohydrate degradation; L-arabinose degradation via L-ribulose; D-xylulose 5-phosphate from L-arabinose (bacterial route): step 1/3. Functionally, catalyzes the conversion of L-arabinose to L-ribulose. The polypeptide is L-arabinose isomerase (Yersinia enterocolitica serotype O:8 / biotype 1B (strain NCTC 13174 / 8081)).